A 267-amino-acid polypeptide reads, in one-letter code: MVTSEFKLFKFMLMGMSIAVALALSGPCRAFDIKGGVSKESGPFDLFKFGFKAYKNGQKEEAVEAYRYAAEKGHTGSRWALANMYADGDGVTQDDFEAFKIYSEIAQQGVEPGSEDTGFFVNALLSLANYYKHGIAGSPVRIDLSQARQLYFQVASTFGVPEAQFQLAQMMLAGEGGNASPQQAKKWLNQARKSGHPGAMAVFGNILFDEGQTARGLALMTAALDRCKPKDCGWMEALQEQAFSVANEADRRTAVSLSHSIATGSDD.

A signal peptide spans 1-23 (MVTSEFKLFKFMLMGMSIAVALA).

In terms of biological role, negatively modulates exopolysaccharide (EPS) biosynthesis. This is Exopolysaccharide production negative regulator (exoR) from Rhizobium leguminosarum bv. viciae.